We begin with the raw amino-acid sequence, 354 residues long: Opsin-5 (354 aa).

Residues 1–33 are Extracellular-facing; sequence MALNHTALPQDERLPHYLRDGDPFASKLSWEAD. Asn-4 carries an N-linked (GlcNAc...) asparagine glycan. Residues 34-54 form a helical membrane-spanning segment; that stretch reads LVAGFYLTIIGILSTFGNGYV. Over 55–74 the chain is Cytoplasmic; it reads LYMSSRRKKKLRPAEIMTIN. Residues 75–95 traverse the membrane as a helical segment; it reads LAVCDLGISVVGKPFTIISCF. Residues 96–108 are Extracellular-facing; sequence CHRWVFGWIGCRW. Cys-106 and Cys-183 are disulfide-bonded. Residues 109–129 traverse the membrane as a helical segment; sequence YGWAGFFFGCGSLITMTAVSL. At 130-150 the chain is on the cytoplasmic side; sequence DRYLKICYLSYGVWLKRKHAY. A helical transmembrane segment spans residues 151 to 171; it reads ICLAAIWAYASFWTTMPLVGL. Residues 172–197 are Extracellular-facing; the sequence is GDYVPEPFGTSCTLDWWLAQASVGGQ. Residues 198 to 218 traverse the membrane as a helical segment; the sequence is VFILNILFFCLLLPTAVIVFS. At 219 to 252 the chain is on the cytoplasmic side; sequence YVKIIAKVKSSSKEVAHFDSRIHSSHVLEMKLTK. Residues 253-273 form a helical membrane-spanning segment; it reads VAMLICAGFLIAWIPYAVVSV. Over 274-288 the chain is Extracellular; that stretch reads WSAFGRPDSIPIQLS. A helical transmembrane segment spans residues 289-309; sequence VVPTLLAKSAAMYNPIIYQVI. An N6-(retinylidene)lysine modification is found at Lys-296. The Cytoplasmic segment spans residues 310–353; that stretch reads DYKFACCQTGGLKATKKKSLEGFRLHTVTTVRKSSAVLEIHEEW. Residues Cys-315 and Cys-316 are each lipidated (S-palmitoyl cysteine).

Belongs to the G-protein coupled receptor 1 family. Opsin subfamily. It is uncertain whether Cys-315 or Cys-316 is palmitoylated. In terms of tissue distribution, detected in brain and retina and cell lines derived from neural retina.

It is found in the cell membrane. In terms of biological role, G-protein coupled receptor which selectively activates G(i) type G proteins via ultraviolet A (UVA) light-mediated activation in the retina. Preferentially binds the chromophore 11-cis retinal and is a bistable protein that displays emission peaks at 380 nm (UVA light) and 470 nm (blue light). Required for the light-response in the inner plexiform layer, and contributes to the regulation of the light-response in the nerve fiber layer, via phosphorylated DAT/SLC6A3 dopamine uptake. Involved in local corneal and retinal circadian rhythm photoentrainment via modulation of the UVA light-induced phase-shift of the retina clock. Acts as a circadian photoreceptor in the outer ear, via modulation of circadian clock-gene expression in response to violet light during the light-to-dark transition phase and night phase of the circadian cycle. Required in the retina to negatively regulate hyaloid vessel regression during postnatal development via light-dependent OPN5-SLC32A1-DRD2-VEGFR2 signaling. Involved in the light-dependent regulation of retina and vitreous compartment dopamine levels. The chain is Opsin-5 (OPN5) from Homo sapiens (Human).